The primary structure comprises 194 residues: Orotate phosphoribosyltransferase (194 aa).

Residues R102, K103, K106, H108, and 129–137 each bind 5-phospho-alpha-D-ribose 1-diphosphate; that span reads EDVVTTGGS. Orotate is bound by residues T133 and R161.

The protein belongs to the purine/pyrimidine phosphoribosyltransferase family. PyrE subfamily. As to quaternary structure, homodimer. The cofactor is Mg(2+).

The catalysed reaction is orotidine 5'-phosphate + diphosphate = orotate + 5-phospho-alpha-D-ribose 1-diphosphate. It functions in the pathway pyrimidine metabolism; UMP biosynthesis via de novo pathway; UMP from orotate: step 1/2. In terms of biological role, catalyzes the transfer of a ribosyl phosphate group from 5-phosphoribose 1-diphosphate to orotate, leading to the formation of orotidine monophosphate (OMP). The sequence is that of Orotate phosphoribosyltransferase from Prochlorococcus marinus (strain MIT 9211).